A 560-amino-acid chain; its full sequence is MKVWMAILISILCWQSSAWAVCPAWSPARAQEEISRLQQQIKQWDDDYWKEGKSEVEDGVYDQLSARLTQWQRCFGNETRDVMMPPLNGAVMHPVAHTGVRKMADKNALSLWMRERSDLWVQPKVDGVAVTLVYRDGKLNKAISRGNGLKGEDWTQKVRLISAVPQTVSGPLANSTLQGEIFLKRKGHIQQQMGGINARAKVAGLMMRQGNSDTLNSLAVFVWAWPDGPHLMTDRLKDLATAGFTLTQTYTRAVKNADEVAHVRNEWWKAKLPFVTDGVVVRAAKEPESRHWLPGQAEWLVAWKYQPVAQVAEVKAIQFAVGKSGKISVVASLAPVMLDDKKIQRVNIGSVRRWQEWDIAPGDQILVSLAGQGIPRIDDVVWRGAERTKPTPPENRFNSLTCYFASDVCQEQFISRLVWLGSKQVLGLDGIGEAGWRALHQTHRFEHIFSWLLLTPEQLQNTPGIAKSKSAQLWHQFNLARQQPFTRWVMAMGIPLTRAALNASDERSWSQLLFSKEQFWQQLPGTGSGRARQVIEWKENAQIKKLGSWLAAQQITGFEP.

Lys124 acts as the N6-AMP-lysine intermediate in catalysis.

This sequence belongs to the NAD-dependent DNA ligase family. LigB subfamily.

The enzyme catalyses NAD(+) + (deoxyribonucleotide)n-3'-hydroxyl + 5'-phospho-(deoxyribonucleotide)m = (deoxyribonucleotide)n+m + AMP + beta-nicotinamide D-nucleotide.. Functionally, catalyzes the formation of phosphodiester linkages between 5'-phosphoryl and 3'-hydroxyl groups in double-stranded DNA using NAD as a coenzyme and as the energy source for the reaction. The sequence is that of DNA ligase B from Escherichia coli O81 (strain ED1a).